Here is a 119-residue protein sequence, read N- to C-terminus: Ghilanten (119 aa).

Gln1 bears the Pyrrolidone carboxylic acid mark. 10 disulfide bridges follow: Cys8–Cys19, Cys13–Cys26, Cys28–Cys48, Cys33–Cys51, Cys37–Cys53, Cys62–Cys73, Cys67–Cys80, Cys82–Cys103, Cys88–Cys106, and Cys92–Cys108. The Antistasin-like 1 domain maps to 28 to 53; sequence CPEVRCRVYCSHGFQRSRYGCEVCRC. An Antistasin-like 2 domain is found at 83–108; sequence KIDINCRKTCPNGLKRDKLGCEYCEC. Residues 97-100 and 111-118 each bind heparin; these read KRDK and KRKLVPRL.

This sequence belongs to the protease inhibitor I15 (antistasin) family.

It localises to the secreted. This highly disulfide-bonded protein is a potent inhibitor of factor Xa. May have therapeutic utility as an anticoagulant. Also exhibits a strong metastatic activity. This chain is Ghilanten, found in Haementeria ghilianii (Amazon leech).